A 1438-amino-acid chain; its full sequence is Lysophospholipase NTE1 (1438 aa).

The Cytoplasmic segment spans residues 1-25; sequence MDSDTSSADFHSTETLVSTPKYSYG. The chain crosses the membrane as a helical span at residues 26-46; the sequence is VLINVILLVSWTCFRVVNWFL. Residues 47–64 are Lumenal-facing; it reads VTLPSILLGMLSKTFQIT. A helical membrane pass occupies residues 65–85; sequence LSLSSILMFVVAVTAICFLVV. Topologically, residues 86–1438 are cytoplasmic; it reads RYKYLTRYSR…HVSLSRRNSI (1353 aa). Residues 432 to 450 are compositionally biased toward polar residues; that stretch reads YETQTIPNESEDSPTIQRS. The interval 432 to 464 is disordered; it reads YETQTIPNESEDSPTIQRSSLRRRASHSTSLRK. A nucleoside 3',5'-cyclic phosphate is bound by residues 590 to 720 and 707 to 856; these read GDDS…LTID and RLKR…VANR. One can recognise a PNPLA domain in the interval 1131–1295; the sequence is LVLGGGGSRG…LDNLPVSEMK (165 aa). Residues 1135-1140 carry the GXGXXG motif; it reads GGGSRG. The GXSXG motif lies at 1162 to 1166; the sequence is GTSIG. Ser-1164 acts as the Nucleophile in catalysis. Asp-1282 (proton acceptor) is an active-site residue. The short motif at 1282–1284 is the DGA/G element; that stretch reads DGG.

Belongs to the NTE family.

Its subcellular location is the endoplasmic reticulum membrane. It catalyses the reaction a 1-acyl-sn-glycero-3-phosphocholine + H2O = sn-glycerol 3-phosphocholine + a fatty acid + H(+). With respect to regulation, inhibited by organophosphorus esters. In terms of biological role, intracellular phospholipase B that catalyzes the double deacylation of phosphatidylcholine (PC) to glycerophosphocholine (GroPCho). Plays an important role in membrane lipid homeostasis. Responsible for the rapid PC turnover in response to inositol, elevated temperatures, or when choline is present in the growth medium. This is Lysophospholipase NTE1 (NTE1) from Meyerozyma guilliermondii (strain ATCC 6260 / CBS 566 / DSM 6381 / JCM 1539 / NBRC 10279 / NRRL Y-324) (Yeast).